The chain runs to 678 residues: Methionine--tRNA ligase (678 aa).

Positions 18 to 28 (PYANGPIHLGH) match the 'HIGH' region motif. The Zn(2+) site is built by Cys-149, Cys-152, Cys-162, and Cys-165. The 'KMSKS' region motif lies at 334 to 338 (KMSKS). Residue Lys-337 participates in ATP binding. The tRNA-binding domain maps to 577-678 (DFAKVDLRVA…SGATPGMRVM (102 aa)).

It belongs to the class-I aminoacyl-tRNA synthetase family. MetG type 1 subfamily. Homodimer. It depends on Zn(2+) as a cofactor.

It is found in the cytoplasm. The catalysed reaction is tRNA(Met) + L-methionine + ATP = L-methionyl-tRNA(Met) + AMP + diphosphate. In terms of biological role, is required not only for elongation of protein synthesis but also for the initiation of all mRNA translation through initiator tRNA(fMet) aminoacylation. This is Methionine--tRNA ligase from Marinobacter nauticus (strain ATCC 700491 / DSM 11845 / VT8) (Marinobacter aquaeolei).